The following is a 252-amino-acid chain: dITP/XTP pyrophosphatase (252 aa).

Residue 7-12 participates in substrate binding; that stretch reads THNEGK. Asp74 functions as the Proton acceptor in the catalytic mechanism. Position 74 (Asp74) interacts with Mg(2+). Residues Ser75 and 193 to 196 each bind substrate; that span reads FGYD. The tract at residues 202-229 is disordered; the sequence is DDQPAGRVSTEPDHEGEPLTSAEMTPAE. Residues Lys230 and 235–236 each bind substrate; that span reads HR.

Belongs to the HAM1 NTPase family. Homodimer. Mg(2+) serves as cofactor.

It carries out the reaction XTP + H2O = XMP + diphosphate + H(+). It catalyses the reaction dITP + H2O = dIMP + diphosphate + H(+). The enzyme catalyses ITP + H2O = IMP + diphosphate + H(+). In terms of biological role, pyrophosphatase that catalyzes the hydrolysis of nucleoside triphosphates to their monophosphate derivatives, with a high preference for the non-canonical purine nucleotides XTP (xanthosine triphosphate), dITP (deoxyinosine triphosphate) and ITP. Seems to function as a house-cleaning enzyme that removes non-canonical purine nucleotides from the nucleotide pool, thus preventing their incorporation into DNA/RNA and avoiding chromosomal lesions. The sequence is that of dITP/XTP pyrophosphatase from Bifidobacterium longum (strain NCC 2705).